The following is a 500-amino-acid chain: Cytochrome P450 2D20 (500 aa).

C446 provides a ligand contact to heme.

This sequence belongs to the cytochrome P450 family. It depends on heme as a cofactor.

It localises to the endoplasmic reticulum membrane. It is found in the microsome membrane. The polypeptide is Cytochrome P450 2D20 (CYP2D20) (Mesocricetus auratus (Golden hamster)).